The primary structure comprises 582 residues: ATP-dependent lipid A-core flippase (582 aa).

Transmembrane regions (helical) follow at residues 16–36 (LWPT…ALIL), 64–84 (LLWM…TSYI), 153–173 (IIGL…ILVV), 253–273 (PIIQ…ASFP), and 275–295 (VMDS…IALM). The region spanning 28 to 310 (IVAGIALILN…LTNVNAQFQR (283 aa)) is the ABC transmembrane type-1 domain. The 237-residue stretch at 342–578 (LEFRNVTFTY…HGVYAQLHKM (237 aa)) folds into the ABC transporter domain. An ATP-binding site is contributed by 376-383 (GRSGSGKS).

Belongs to the ABC transporter superfamily. Lipid exporter (TC 3.A.1.106) family. Homodimer.

It localises to the cell inner membrane. It catalyses the reaction ATP + H2O + lipid A-core oligosaccharideSide 1 = ADP + phosphate + lipid A-core oligosaccharideSide 2.. Its function is as follows. Involved in lipopolysaccharide (LPS) biosynthesis. Translocates lipid A-core from the inner to the outer leaflet of the inner membrane. Transmembrane domains (TMD) form a pore in the inner membrane and the ATP-binding domain (NBD) is responsible for energy generation. In Salmonella paratyphi A (strain ATCC 9150 / SARB42), this protein is ATP-dependent lipid A-core flippase.